The following is a 233-amino-acid chain: Large ribosomal subunit protein uL1 (233 aa).

It belongs to the universal ribosomal protein uL1 family. As to quaternary structure, part of the 50S ribosomal subunit.

Functionally, binds directly to 23S rRNA. The L1 stalk is quite mobile in the ribosome, and is involved in E site tRNA release. Its function is as follows. Protein L1 is also a translational repressor protein, it controls the translation of the L11 operon by binding to its mRNA. The sequence is that of Large ribosomal subunit protein uL1 from Syntrophomonas wolfei subsp. wolfei (strain DSM 2245B / Goettingen).